We begin with the raw amino-acid sequence, 78 residues long: Translational regulator CsrA (78 aa).

It belongs to the CsrA/RsmA family. In terms of assembly, homodimer; the beta-strands of each monomer intercalate to form a hydrophobic core, while the alpha-helices form wings that extend away from the core.

The protein localises to the cytoplasm. In terms of biological role, a translational regulator that binds mRNA to regulate translation initiation and/or mRNA stability. Usually binds in the 5'-UTR at or near the Shine-Dalgarno sequence preventing ribosome-binding, thus repressing translation. Its main target seems to be the major flagellin gene, while its function is anatagonized by FliW. The polypeptide is Translational regulator CsrA (Desulfotalea psychrophila (strain LSv54 / DSM 12343)).